The following is a 374-amino-acid chain: uncharacterized protein (374 aa).

The first 21 residues, 1–21, serve as a signal peptide directing secretion; that stretch reads MSIISRVCIPCAVLLFAQLHA. Positions 22-102 constitute a Fibronectin type-III domain; that stretch reads KELVHVSQLK…ASASAWTSLS (81 aa).

This is an uncharacterized protein from Treponema pallidum (strain Nichols).